We begin with the raw amino-acid sequence, 501 residues long: Nucleic-acid-binding protein from transposon X-element (501 aa).

2 disordered regions span residues 20–71 and 105–128; these read SSPQ…GNSN and AAAK…SKPP. The CCHC-type zinc finger occupies 285-302; that stretch reads VQCHRCQQIGHTAKYCRK. Disordered stretches follow at residues 353 to 385 and 400 to 443; these read RPRS…SRGG and QPMS…TDAS. The span at 407 to 422 shows a compositional bias: low complexity; sequence QQQKQKQQPYDGSPSR. Residues 434-443 are compositionally biased toward polar residues; that stretch reads GTLQRSTDAS.

It is found in the virion. Strongly basic protein that binds directly to retroviral RNA and may be involved in its packaging and in the reverse transcription process. In Drosophila melanogaster (Fruit fly), this protein is Nucleic-acid-binding protein from transposon X-element.